We begin with the raw amino-acid sequence, 579 residues long: Vacuolar protein 8 (579 aa).

Residue Gly2 is the site of N-myristoyl glycine attachment. Residues Cys4, Cys5, and Cys7 are each lipidated (S-palmitoyl cysteine). ARM repeat units lie at residues 39–76 (NKDQ…FAEI), 77–116 (TEKY…NLAV), 118–157 (NENK…NLAT), 159–198 (DDNK…NMTH), 200–239 (GENR…NIAV), 241–282 (ESNR…NLAS), 284–323 (TNYQ…NISI), 325–365 (PLNE…NLAA), and 409–448 (DNTK…NLIS). Over residues 534-556 (QDTNIDHNGNSNNIEGNGRSNKQ) the composition is skewed to polar residues. The tract at residues 534 to 560 (QDTNIDHNGNSNNIEGNGRSNKQSSEK) is disordered.

The protein belongs to the beta-catenin family.

The protein localises to the vacuole membrane. In terms of biological role, functions in both vacuole inheritance and protein targeting from the cytoplasm to vacuole. The protein is Vacuolar protein 8 (VAC8) of Kluyveromyces lactis (strain ATCC 8585 / CBS 2359 / DSM 70799 / NBRC 1267 / NRRL Y-1140 / WM37) (Yeast).